The following is a 316-amino-acid chain: Aspartate carbamoyltransferase catalytic subunit (316 aa).

Carbamoyl phosphate-binding residues include Arg-56 and Thr-57. Lys-84 is an L-aspartate binding site. The carbamoyl phosphate site is built by Arg-106, His-139, and Gln-142. 2 residues coordinate L-aspartate: Arg-172 and Arg-224. 2 residues coordinate carbamoyl phosphate: Gly-268 and Pro-269.

The protein belongs to the aspartate/ornithine carbamoyltransferase superfamily. ATCase family. Heterododecamer (2C3:3R2) of six catalytic PyrB chains organized as two trimers (C3), and six regulatory PyrI chains organized as three dimers (R2).

The catalysed reaction is carbamoyl phosphate + L-aspartate = N-carbamoyl-L-aspartate + phosphate + H(+). Its pathway is pyrimidine metabolism; UMP biosynthesis via de novo pathway; (S)-dihydroorotate from bicarbonate: step 2/3. Functionally, catalyzes the condensation of carbamoyl phosphate and aspartate to form carbamoyl aspartate and inorganic phosphate, the committed step in the de novo pyrimidine nucleotide biosynthesis pathway. The polypeptide is Aspartate carbamoyltransferase catalytic subunit (Ligilactobacillus salivarius (strain UCC118) (Lactobacillus salivarius)).